The primary structure comprises 217 residues: Cytidylate kinase (217 aa).

9 to 17 provides a ligand contact to ATP; it reads GPAGSGKTT.

This sequence belongs to the cytidylate kinase family. Type 1 subfamily.

It is found in the cytoplasm. The enzyme catalyses CMP + ATP = CDP + ADP. The catalysed reaction is dCMP + ATP = dCDP + ADP. The chain is Cytidylate kinase from Thermosipho melanesiensis (strain DSM 12029 / CIP 104789 / BI429).